The sequence spans 599 residues: Probable acetolactate synthase large subunit (599 aa).

Glu47 serves as a coordination point for thiamine diphosphate. Residues Arg149, 258–279, and 301–320 each bind FAD; these read HGTK…IGCR and DIDP…IVGD. A thiamine pyrophosphate binding region spans residues 404–484; sequence QNQMWMAHYF…VVICIFDNRT (81 aa). The Mg(2+) site is built by Asp455 and Asn482.

The protein belongs to the TPP enzyme family. In terms of assembly, dimer of large and small chains. Requires Mg(2+) as cofactor. Thiamine diphosphate serves as cofactor.

It catalyses the reaction 2 pyruvate + H(+) = (2S)-2-acetolactate + CO2. The protein operates within amino-acid biosynthesis; L-isoleucine biosynthesis; L-isoleucine from 2-oxobutanoate: step 1/4. Its pathway is amino-acid biosynthesis; L-valine biosynthesis; L-valine from pyruvate: step 1/4. The chain is Probable acetolactate synthase large subunit (ilvB) from Methanococcus aeolicus.